A 91-amino-acid chain; its full sequence is Signal recognition particle 19 kDa protein (91 aa).

It belongs to the SRP19 family. Part of the signal recognition particle protein translocation system, which is composed of SRP and FtsY. Archaeal SRP consists of a 7S RNA molecule of 300 nucleotides and two protein subunits: SRP54 and SRP19.

The protein resides in the cytoplasm. Functionally, involved in targeting and insertion of nascent membrane proteins into the cytoplasmic membrane. Binds directly to 7S RNA and mediates binding of the 54 kDa subunit of the SRP. The sequence is that of Signal recognition particle 19 kDa protein from Methanoregula boonei (strain DSM 21154 / JCM 14090 / 6A8).